Here is a 224-residue protein sequence, read N- to C-terminus: Small ribosomal subunit protein uS3 (224 aa).

The KH type-2 domain maps to 38–106; sequence LREFVKEKLG…EVYLNVVEVR (69 aa).

The protein belongs to the universal ribosomal protein uS3 family. In terms of assembly, part of the 30S ribosomal subunit. Forms a tight complex with proteins S10 and S14.

In terms of biological role, binds the lower part of the 30S subunit head. Binds mRNA in the 70S ribosome, positioning it for translation. The chain is Small ribosomal subunit protein uS3 from Anaeromyxobacter dehalogenans (strain 2CP-C).